A 344-amino-acid chain; its full sequence is GTPase Obg (344 aa).

Positions 1–12 (MFVDSASFSVSS) are enriched in polar residues. Residues 1-36 (MFVDSASFSVSSGKGGPGCASFRREKHVPLGGPDGG) are disordered. One can recognise an Obg domain in the interval 1–158 (MFVDSASFSV…RNIRLELKLI (158 aa)). The OBG-type G domain maps to 159 to 341 (ADVGLVGFPN…LKFGLLEILK (183 aa)). Residues 165-172 (GFPNVGKS), 190-194 (FTTLT), 212-215 (DIPG), 280-283 (TRLD), and 322-324 (SSV) contribute to the GTP site. The Mg(2+) site is built by Ser-172 and Thr-192.

The protein belongs to the TRAFAC class OBG-HflX-like GTPase superfamily. OBG GTPase family. As to quaternary structure, monomer. Mg(2+) is required as a cofactor.

It localises to the cytoplasm. An essential GTPase which binds GTP, GDP and possibly (p)ppGpp with moderate affinity, with high nucleotide exchange rates and a fairly low GTP hydrolysis rate. Plays a role in control of the cell cycle, stress response, ribosome biogenesis and in those bacteria that undergo differentiation, in morphogenesis control. In Campylobacter fetus subsp. fetus (strain 82-40), this protein is GTPase Obg.